Consider the following 190-residue polypeptide: Protein soem-1 (190 aa).

One can recognise an SH2 domain in the interval Tyr-96–Val-190.

As to quaternary structure, interacts with abl-1. As to expression, expressed in PQR, but not AQR, Q neuroblast descendents.

In terms of biological role, functions downstream of migratory protein mig-13 and may play a role in the control of Q neuroblast migration during larval development. This is Protein soem-1 from Caenorhabditis elegans.